Here is a 147-residue protein sequence, read N- to C-terminus: Auxin-responsive protein SAUR41 (147 aa).

This sequence belongs to the ARG7 family. As to expression, specifically expressed in the quiescent center and cortex or endodermis initials of root stem niches. Expressed in vascular tissues from hypocotyls, petioles and cotyledons.

It is found in the cytoplasm. In terms of biological role, plays a role in the regulation of cell expansion, root meristem patterning and auxin transport. The protein is Auxin-responsive protein SAUR41 of Arabidopsis thaliana (Mouse-ear cress).